The following is a 63-amino-acid chain: uncharacterized protein (63 aa).

Its subcellular location is the mitochondrion. This is an uncharacterized protein from Marchantia polymorpha (Common liverwort).